The primary structure comprises 163 residues: Inner membrane protein YcdZ (163 aa).

The Cytoplasmic segment spans residues Met-1–Asn-2. A helical membrane pass occupies residues Ile-3–Val-23. Ser-24 is a topological domain (periplasmic). The chain crosses the membrane as a helical span at residues Leu-25–Gly-45. Residues Gly-46–Lys-48 are Cytoplasmic-facing. A helical transmembrane segment spans residues Gly-49–Tyr-69. Topologically, residues Gly-70 to Ser-71 are periplasmic. A helical membrane pass occupies residues Ala-72 to Met-92. The Cytoplasmic segment spans residues Cys-93–Gln-98. The helical transmembrane segment at Leu-99 to Gly-119 threads the bilayer. Over Asp-120–Lys-122 the chain is Periplasmic. The helical transmembrane segment at Leu-123–Leu-143 threads the bilayer. Over Trp-144–Ala-163 the chain is Cytoplasmic.

To E.coli YahC.

It is found in the cell inner membrane. The sequence is that of Inner membrane protein YcdZ (ycdZ) from Escherichia coli (strain K12).